The primary structure comprises 200 residues: Pyridoxal 5'-phosphate synthase subunit PdxT (200 aa).

An L-glutamine-binding site is contributed by 52–54 (GES). Catalysis depends on cysteine 84, which acts as the Nucleophile. L-glutamine contacts are provided by residues arginine 116 and 145 to 146 (IR). Catalysis depends on charge relay system residues histidine 181 and glutamate 183.

The protein belongs to the glutaminase PdxT/SNO family. As to quaternary structure, in the presence of PdxS, forms a dodecamer of heterodimers. Only shows activity in the heterodimer.

The catalysed reaction is aldehydo-D-ribose 5-phosphate + D-glyceraldehyde 3-phosphate + L-glutamine = pyridoxal 5'-phosphate + L-glutamate + phosphate + 3 H2O + H(+). It catalyses the reaction L-glutamine + H2O = L-glutamate + NH4(+). It functions in the pathway cofactor biosynthesis; pyridoxal 5'-phosphate biosynthesis. Catalyzes the hydrolysis of glutamine to glutamate and ammonia as part of the biosynthesis of pyridoxal 5'-phosphate. The resulting ammonia molecule is channeled to the active site of PdxS. This chain is Pyridoxal 5'-phosphate synthase subunit PdxT, found in Saccharolobus islandicus (strain M.16.27) (Sulfolobus islandicus).